Reading from the N-terminus, the 151-residue chain is 3-hydroxyacyl-[acyl-carrier-protein] dehydratase FabZ (151 aa).

Histidine 54 is a catalytic residue.

It belongs to the thioester dehydratase family. FabZ subfamily.

The protein localises to the cytoplasm. It catalyses the reaction a (3R)-hydroxyacyl-[ACP] = a (2E)-enoyl-[ACP] + H2O. Involved in unsaturated fatty acids biosynthesis. Catalyzes the dehydration of short chain beta-hydroxyacyl-ACPs and long chain saturated and unsaturated beta-hydroxyacyl-ACPs. This is 3-hydroxyacyl-[acyl-carrier-protein] dehydratase FabZ from Sodalis glossinidius (strain morsitans).